A 96-amino-acid polypeptide reads, in one-letter code: MNLRPLHDRVIIKRLDQESKTASGIIIPDAAAEKPDQGEILAVGPGKRDEAGKLNPLDVKVGDRVLFGKYAGQTVKVDGDELIVMREDDIMAVVQK.

The protein belongs to the GroES chaperonin family. Heptamer of 7 subunits arranged in a ring. Interacts with the chaperonin GroEL.

It localises to the cytoplasm. Its function is as follows. Together with the chaperonin GroEL, plays an essential role in assisting protein folding. The GroEL-GroES system forms a nano-cage that allows encapsulation of the non-native substrate proteins and provides a physical environment optimized to promote and accelerate protein folding. GroES binds to the apical surface of the GroEL ring, thereby capping the opening of the GroEL channel. This Polynucleobacter asymbioticus (strain DSM 18221 / CIP 109841 / QLW-P1DMWA-1) (Polynucleobacter necessarius subsp. asymbioticus) protein is Co-chaperonin GroES.